The following is a 346-amino-acid chain: 4-amino-5-hydroxymethyl-2-methylpyrimidine phosphate synthase (346 aa).

Residue K62 is modified to N6-(pyridoxal phosphate)lysine. Residue H66 is part of the active site. G114–G117 contributes to the pyridoxal 5'-phosphate binding site. The CCCFC; essential for catalytic activity, may be the site of iron coordination motif lies at C194 to C198.

Belongs to the NMT1/THI5 family. As to quaternary structure, homodimer. Requires Fe cation as cofactor.

The protein localises to the cytoplasm. It is found in the nucleus. The catalysed reaction is N(6)-(pyridoxal phosphate)-L-lysyl-[4-amino-5-hydroxymethyl-2-methylpyrimidine phosphate synthase] + L-histidyl-[4-amino-5-hydroxymethyl-2-methylpyrimidine phosphate synthase] + 2 Fe(3+) + 4 H2O = L-lysyl-[4-amino-5-hydroxymethyl-2-methylpyrimidine phosphate synthase] + (2S)-2-amino-5-hydroxy-4-oxopentanoyl-[4-amino-5-hydroxymethyl-2-methylpyrimidine phosphate synthase] + 4-amino-2-methyl-5-(phosphooxymethyl)pyrimidine + 3-oxopropanoate + 2 Fe(2+) + 2 H(+). The protein operates within cofactor biosynthesis; thiamine diphosphate biosynthesis. Functionally, responsible for the formation of the pyrimidine heterocycle in the thiamine biosynthesis pathway. Catalyzes the formation of hydroxymethylpyrimidine phosphate (HMP-P) from histidine and pyridoxal phosphate (PLP). The protein uses PLP and the active site histidine to form HMP-P, generating an inactive enzyme. The enzyme can only undergo a single turnover, which suggests it is a suicide enzyme. In Schizosaccharomyces pombe (strain 972 / ATCC 24843) (Fission yeast), this protein is 4-amino-5-hydroxymethyl-2-methylpyrimidine phosphate synthase.